A 323-amino-acid chain; its full sequence is Beta-ketoacyl-[acyl-carrier-protein] synthase III (323 aa).

Catalysis depends on residues Cys113 and His250. Residues 251–255 (QANKR) form an ACP-binding region. Asn280 is an active-site residue.

This sequence belongs to the thiolase-like superfamily. FabH family. In terms of assembly, homodimer.

Its subcellular location is the cytoplasm. The catalysed reaction is malonyl-[ACP] + acetyl-CoA + H(+) = 3-oxobutanoyl-[ACP] + CO2 + CoA. The protein operates within lipid metabolism; fatty acid biosynthesis. In terms of biological role, catalyzes the condensation reaction of fatty acid synthesis by the addition to an acyl acceptor of two carbons from malonyl-ACP. Catalyzes the first condensation reaction which initiates fatty acid synthesis and may therefore play a role in governing the total rate of fatty acid production. Possesses both acetoacetyl-ACP synthase and acetyl transacylase activities. Its substrate specificity determines the biosynthesis of branched-chain and/or straight-chain of fatty acids. This chain is Beta-ketoacyl-[acyl-carrier-protein] synthase III, found in Brucella suis (strain ATCC 23445 / NCTC 10510).